The sequence spans 372 residues: Chaperone protein DnaJ (372 aa).

Residues 5–70 (DYYDLLEVSR…EKRAGYDRYG (66 aa)) form the J domain. The segment at 134-212 (GIQAPIHYVT…CGGSGRKRDE (79 aa)) adopts a CR-type zinc-finger fold. Residues Cys-147, Cys-150, Cys-164, Cys-167, Cys-186, Cys-189, Cys-200, and Cys-203 each coordinate Zn(2+). CXXCXGXG motif repeat units lie at residues 147 to 154 (CNTCQGTG), 164 to 171 (CNTCQGSG), 186 to 193 (CTTCYGEG), and 200 to 207 (CKKCGGSG).

The protein belongs to the DnaJ family. As to quaternary structure, homodimer. It depends on Zn(2+) as a cofactor.

The protein resides in the cytoplasm. In terms of biological role, participates actively in the response to hyperosmotic and heat shock by preventing the aggregation of stress-denatured proteins and by disaggregating proteins, also in an autonomous, DnaK-independent fashion. Unfolded proteins bind initially to DnaJ; upon interaction with the DnaJ-bound protein, DnaK hydrolyzes its bound ATP, resulting in the formation of a stable complex. GrpE releases ADP from DnaK; ATP binding to DnaK triggers the release of the substrate protein, thus completing the reaction cycle. Several rounds of ATP-dependent interactions between DnaJ, DnaK and GrpE are required for fully efficient folding. Also involved, together with DnaK and GrpE, in the DNA replication of plasmids through activation of initiation proteins. The protein is Chaperone protein DnaJ of Wolbachia pipientis subsp. Culex pipiens (strain wPip).